A 793-amino-acid polypeptide reads, in one-letter code: Putative dipeptidyl aminopeptidase C2E11.08 (793 aa).

Over 1-24 (MNDFSFEDKGLISRSGFGSRHVRR) the chain is Cytoplasmic. Residues 25–45 (VVKALALIFSLLILYLTISNV) form a helical; Signal-anchor for type II membrane protein membrane-spanning segment. Residues 46–793 (SDSPPKRDSL…STGVRQHRWD (748 aa)) are Lumenal-facing. N-linked (GlcNAc...) asparagine glycosylation is found at N101, N136, N246, N299, N303, N324, N336, N377, N384, N407, and N535. Residues S647, D722, and H755 each act as charge relay system in the active site. An N-linked (GlcNAc...) asparagine glycan is attached at N761.

It belongs to the peptidase S9B family.

It is found in the vacuole membrane. The polypeptide is Putative dipeptidyl aminopeptidase C2E11.08 (Schizosaccharomyces pombe (strain 972 / ATCC 24843) (Fission yeast)).